The chain runs to 820 residues: Potassium channel GORK (820 aa).

Residues 1-69 (MGRLRRRQEI…PKNRWYKAWE (69 aa)) are Cytoplasmic-facing. The helical transmembrane segment at 70–90 (MFILVWAIYSSLFTPMEFGFF) threads the bilayer. Residues 91–97 (RGLPERL) lie on the Extracellular side of the membrane. The chain crosses the membrane as a helical span at residues 98 to 118 (FVLDIVGQIAFLVDIVLQFFV). Over 119–141 (AYRDTQTYRTVYKPTRIAFRYLK) the chain is Cytoplasmic. A helical membrane pass occupies residues 142 to 162 (SHFLMDFIGCFPWDLIYKASG). Residues 163-168 (KHELVR) lie on the Extracellular side of the membrane. A helical; Voltage-sensor transmembrane segment spans residues 169–189 (YLLWIRLFRVRKVVEFFQRLE). Topologically, residues 190 to 203 (KDTRINYLFTRILK) are cytoplasmic. The chain crosses the membrane as a helical span at residues 204–224 (LLFVEVYCTHTAACIFYYLAT). The Extracellular segment spans residues 225–259 (TLPPENEGYTWIGSLKLGDYSYENFREIDLWKRYT). Residues 260–279 (TALYFAIVTMATVGYGDIHA) constitute an intramembrane region (pore-forming). Residues 280–285 (VNLREM) are Extracellular-facing. The helical transmembrane segment at 286-306 (IFVMIYVSFDMVLGAYLIGNI) threads the bilayer. Topologically, residues 307–820 (TALIVKGSNT…YMISDTTDQT (514 aa)) are cytoplasmic. A nucleoside 3',5'-cyclic phosphate is bound at residue 386-508 (LFKGCSTEFI…ILNNIMEEKE (123 aa)). ANK repeat units lie at residues 528 to 559 (EAEL…DPNK), 563 to 592 (DGRS…DVNL), 596 to 625 (FGHT…SFNL), 627 to 656 (DSGN…NPNS), 660 to 689 (DHRT…SVIS), and 693 to 722 (WGNS…AQSS). Positions 740-820 (KCTVFPFHPQ…YMISDTTDQT (81 aa)) constitute a KHA domain.

Belongs to the potassium channel family. Plant (TC 1.A.1.4) subfamily. In terms of assembly, the potassium channel is probably composed of a homo- or heterotetrameric complex of pore-forming subunits. Expressed in guard cell-containing tissues, in root epidermal cells and in root hairs. Detected in vascular cells of the root and shoot.

It is found in the membrane. Major selective outward-rectifying potassium channel of the guard cell membrane. Involved in regulation of stomatal movements according to the water status. Assuming opened or closed conformations in response to the voltage difference across the membrane, the channel is activated by depolarization. Conductance of the channel is modulated in a potassium-dependent fashion. May interact with the cytoskeleton or with regulatory proteins. The chain is Potassium channel GORK (GORK) from Arabidopsis thaliana (Mouse-ear cress).